The following is a 562-amino-acid chain: Probable sesquiterpene synthase (562 aa).

Positions 315, 319, and 467 each coordinate Mg(2+). Positions 315 to 319 (DDIYD) match the DDXXD motif motif.

This sequence belongs to the terpene synthase family. Tpsa subfamily. Requires Mg(2+) as cofactor. Mn(2+) is required as a cofactor.

In terms of biological role, sesquiterpene synthase. The sequence is that of Probable sesquiterpene synthase (SesquiTPS) from Santalum austrocaledonicum (Sandalwood).